We begin with the raw amino-acid sequence, 37 residues long: Large ribosomal subunit protein bL36 (37 aa).

This sequence belongs to the bacterial ribosomal protein bL36 family.

This is Large ribosomal subunit protein bL36 from Synechococcus sp. (strain CC9605).